Consider the following 446-residue polypeptide: Probable glucan endo-1,3-beta-glucosidase eglC (446 aa).

The first 18 residues, 1 to 18 (MQFTHLVALALALATSEA), serve as a signal peptide directing secretion. E128 serves as the catalytic Proton donor. N183 carries an N-linked (GlcNAc...) asparagine glycan. Catalysis depends on E239, which acts as the Nucleophile. N-linked (GlcNAc...) asparagine glycosylation is found at N364 and N370. Positions 393–416 (SSGAGASGASGQSSSSTGSSSAPS) are disordered. The segment covering 401 to 416 (ASGQSSSSTGSSSAPS) has biased composition (low complexity). N423 carries the GPI-anchor amidated asparagine lipid modification. A propeptide spans 424–446 (AASGLSGSIFGAVVAVCLALAAL) (removed in mature form).

Belongs to the glycosyl hydrolase 17 family. In terms of processing, the GPI-anchor is attached to the protein in the endoplasmic reticulum and serves to target the protein to the cell surface. There, the glucosamine-inositol phospholipid moiety is cleaved off and the GPI-modified mannoprotein is covalently attached via its lipidless GPI glycan remnant to the 1,6-beta-glucan of the outer cell wall layer.

It localises to the cell membrane. It is found in the secreted. Its subcellular location is the cell wall. The enzyme catalyses Hydrolysis of (1-&gt;3)-beta-D-glucosidic linkages in (1-&gt;3)-beta-D-glucans.. Functionally, glucanases play a role in cell expansion during growth, in cell-cell fusion during mating, and in spore release during sporulation. This enzyme may be involved in beta-glucan degradation and also function biosynthetically as a transglycosylase. In Aspergillus fumigatus (strain ATCC MYA-4609 / CBS 101355 / FGSC A1100 / Af293) (Neosartorya fumigata), this protein is Probable glucan endo-1,3-beta-glucosidase eglC (eglC).